We begin with the raw amino-acid sequence, 118 residues long: NADH-ubiquinone oxidoreductase chain 3 (118 aa).

The next 3 helical transmembrane spans lie at 9–29, 62–82, and 87–107; these read IYLV…FLFA, LVSI…PWAV, and IDLF…IGFL.

It belongs to the complex I subunit 3 family.

It is found in the mitochondrion membrane. The catalysed reaction is a ubiquinone + NADH + 5 H(+)(in) = a ubiquinol + NAD(+) + 4 H(+)(out). Core subunit of the mitochondrial membrane respiratory chain NADH dehydrogenase (Complex I) that is believed to belong to the minimal assembly required for catalysis. Complex I functions in the transfer of electrons from NADH to the respiratory chain. The immediate electron acceptor for the enzyme is believed to be ubiquinone. The chain is NADH-ubiquinone oxidoreductase chain 3 (NAD3) from Pinus sylvestris (Scotch pine).